The chain runs to 421 residues: Gamma-glutamyl phosphate reductase (421 aa).

This sequence belongs to the gamma-glutamyl phosphate reductase family.

The protein localises to the cytoplasm. The catalysed reaction is L-glutamate 5-semialdehyde + phosphate + NADP(+) = L-glutamyl 5-phosphate + NADPH + H(+). It functions in the pathway amino-acid biosynthesis; L-proline biosynthesis; L-glutamate 5-semialdehyde from L-glutamate: step 2/2. Catalyzes the NADPH-dependent reduction of L-glutamate 5-phosphate into L-glutamate 5-semialdehyde and phosphate. The product spontaneously undergoes cyclization to form 1-pyrroline-5-carboxylate. The protein is Gamma-glutamyl phosphate reductase of Acinetobacter baumannii (strain ACICU).